We begin with the raw amino-acid sequence, 96 residues long: Co-chaperonin GroES 1 (96 aa).

This sequence belongs to the GroES chaperonin family. Heptamer of 7 subunits arranged in a ring. Interacts with the chaperonin GroEL.

The protein localises to the cytoplasm. Its function is as follows. Together with the chaperonin GroEL, plays an essential role in assisting protein folding. The GroEL-GroES system forms a nano-cage that allows encapsulation of the non-native substrate proteins and provides a physical environment optimized to promote and accelerate protein folding. GroES binds to the apical surface of the GroEL ring, thereby capping the opening of the GroEL channel. The sequence is that of Co-chaperonin GroES 1 from Vibrio cholerae serotype O1 (strain ATCC 39315 / El Tor Inaba N16961).